Reading from the N-terminus, the 402-residue chain is Phosphoglycerate kinase (402 aa).

Substrate-binding positions include 24–26 (DFN), Arg40, 63–66 (HFGR), Arg122, and Arg155. ATP is bound by residues Lys206, Gly297, Glu328, and 357-360 (GGDS).

This sequence belongs to the phosphoglycerate kinase family. As to quaternary structure, monomer.

The protein localises to the cytoplasm. It catalyses the reaction (2R)-3-phosphoglycerate + ATP = (2R)-3-phospho-glyceroyl phosphate + ADP. Its pathway is carbohydrate degradation; glycolysis; pyruvate from D-glyceraldehyde 3-phosphate: step 2/5. The protein is Phosphoglycerate kinase of Synechococcus sp. (strain WH7803).